Consider the following 636-residue polypeptide: 1-deoxy-D-xylulose-5-phosphate synthase (636 aa).

Thiamine diphosphate-binding positions include His-74 and 115-117 (GHA). A Mg(2+)-binding site is contributed by Asp-146. Residues 147-148 (GA), Asn-175, Tyr-285, and Glu-368 contribute to the thiamine diphosphate site. Residue Asn-175 participates in Mg(2+) binding.

The protein belongs to the transketolase family. DXPS subfamily. In terms of assembly, homodimer. It depends on Mg(2+) as a cofactor. The cofactor is thiamine diphosphate.

The enzyme catalyses D-glyceraldehyde 3-phosphate + pyruvate + H(+) = 1-deoxy-D-xylulose 5-phosphate + CO2. Its pathway is metabolic intermediate biosynthesis; 1-deoxy-D-xylulose 5-phosphate biosynthesis; 1-deoxy-D-xylulose 5-phosphate from D-glyceraldehyde 3-phosphate and pyruvate: step 1/1. Functionally, catalyzes the acyloin condensation reaction between C atoms 2 and 3 of pyruvate and glyceraldehyde 3-phosphate to yield 1-deoxy-D-xylulose-5-phosphate (DXP). The chain is 1-deoxy-D-xylulose-5-phosphate synthase from Anaeromyxobacter sp. (strain K).